The primary structure comprises 466 residues: 3-isopropylmalate dehydratase large subunit (466 aa).

[4Fe-4S] cluster contacts are provided by Cys347, Cys407, and Cys410.

It belongs to the aconitase/IPM isomerase family. LeuC type 1 subfamily. As to quaternary structure, heterodimer of LeuC and LeuD. [4Fe-4S] cluster is required as a cofactor.

It catalyses the reaction (2R,3S)-3-isopropylmalate = (2S)-2-isopropylmalate. The protein operates within amino-acid biosynthesis; L-leucine biosynthesis; L-leucine from 3-methyl-2-oxobutanoate: step 2/4. Its function is as follows. Catalyzes the isomerization between 2-isopropylmalate and 3-isopropylmalate, via the formation of 2-isopropylmaleate. This is 3-isopropylmalate dehydratase large subunit from Escherichia coli O139:H28 (strain E24377A / ETEC).